The chain runs to 203 residues: Glutathione-specific gamma-glutamylcyclotransferase (203 aa).

12–17 (VFGYGS) is a binding site for substrate. Glutamate 105 functions as the Proton acceptor in the catalytic mechanism.

The protein belongs to the gamma-glutamylcyclotransferase family. ChaC subfamily.

The protein resides in the cytoplasm. It is found in the nucleus. It carries out the reaction glutathione = L-cysteinylglycine + 5-oxo-L-proline. Functionally, gamma-glutamylcyclotransferase acting specifically on glutathione, but not on other gamma-glutamyl peptides. Allows utilization of gluthathione through subsequent cleavage of the Cys-Gly dipeptide by Cys-Gly metallodipeptidase dug1. This is Glutathione-specific gamma-glutamylcyclotransferase from Schizosaccharomyces pombe (strain 972 / ATCC 24843) (Fission yeast).